The primary structure comprises 383 residues: Glutamate 5-kinase (383 aa).

Lys17 serves as a coordination point for ATP. Positions 64, 151, and 165 each coordinate substrate. 185-186 (SD) is an ATP binding site. Residues 291 to 367 (SGTIRVDAGA…DEIEGILGYN (77 aa)) form the PUA domain.

The protein belongs to the glutamate 5-kinase family.

It localises to the cytoplasm. It catalyses the reaction L-glutamate + ATP = L-glutamyl 5-phosphate + ADP. It participates in amino-acid biosynthesis; L-proline biosynthesis; L-glutamate 5-semialdehyde from L-glutamate: step 1/2. Its function is as follows. Catalyzes the transfer of a phosphate group to glutamate to form L-glutamate 5-phosphate. The chain is Glutamate 5-kinase from Methanosarcina barkeri (strain Fusaro / DSM 804).